We begin with the raw amino-acid sequence, 115 residues long: Large ribosomal subunit protein bL19 (115 aa).

This sequence belongs to the bacterial ribosomal protein bL19 family.

Functionally, this protein is located at the 30S-50S ribosomal subunit interface and may play a role in the structure and function of the aminoacyl-tRNA binding site. The chain is Large ribosomal subunit protein bL19 from Leifsonia xyli subsp. xyli (strain CTCB07).